Reading from the N-terminus, the 610-residue chain is Elongation factor 4 (610 aa).

The tr-type G domain occupies 11–193 (ENIRNFSIIA…QIVEKVPAPS (183 aa)). Residues 23-28 (DHGKST) and 140-143 (NKID) contribute to the GTP site.

This sequence belongs to the TRAFAC class translation factor GTPase superfamily. Classic translation factor GTPase family. LepA subfamily.

Its subcellular location is the cell membrane. It catalyses the reaction GTP + H2O = GDP + phosphate + H(+). Functionally, required for accurate and efficient protein synthesis under certain stress conditions. May act as a fidelity factor of the translation reaction, by catalyzing a one-codon backward translocation of tRNAs on improperly translocated ribosomes. Back-translocation proceeds from a post-translocation (POST) complex to a pre-translocation (PRE) complex, thus giving elongation factor G a second chance to translocate the tRNAs correctly. Binds to ribosomes in a GTP-dependent manner. The polypeptide is Elongation factor 4 (Streptococcus equi subsp. zooepidemicus (strain MGCS10565)).